The following is a 145-amino-acid chain: Protoporphyrinogen IX oxidase (145 aa).

A run of 4 helical transmembrane segments spans residues 6–26 (LWFKSAHLISAICWMAGLLYL), 61–81 (AMISTFIFGLINAHIYGFVAL), 83–103 (TWFQFKMFAVLILVIFHGLLA), and 123–143 (IVNEIPAICMVIAVIMVIVKP). Heme is bound at residue histidine 12. Lysine 88 provides a ligand contact to heme.

This sequence belongs to the HemJ family. As to quaternary structure, homodimer. Heme b serves as cofactor.

It is found in the cell membrane. It catalyses the reaction protoporphyrinogen IX + 3 A = protoporphyrin IX + 3 AH2. The protein operates within porphyrin-containing compound metabolism; protoporphyrin-IX biosynthesis; protoporphyrin-IX from protoporphyrinogen-IX: step 1/1. In terms of biological role, catalyzes the oxidation of protoporphyrinogen IX to protoporphyrin IX. Is involved in the biosynthesis of tetrapyrrole molecules like heme. Does not use oxygen or artificial electron acceptors such as menadione or benzoquinone. The sequence is that of Protoporphyrinogen IX oxidase from Rickettsia prowazekii (strain Madrid E).